Reading from the N-terminus, the 188-residue chain is Large ribosomal subunit protein eL18A (188 aa).

A disordered region spans residues 153–188 (GKAPSTPHSRTKPYVLSKGRKFERARGRRASRGYKN). Positions 178-188 (RGRRASRGYKN) are enriched in basic residues.

This sequence belongs to the eukaryotic ribosomal protein eL18 family. Component of the large ribosomal subunit.

Its subcellular location is the cytoplasm. Functionally, component of the large ribosomal subunit. The ribosome is a large ribonucleoprotein complex responsible for the synthesis of proteins in the cell. This Xenopus laevis (African clawed frog) protein is Large ribosomal subunit protein eL18A (rpl18-a).